Here is a 128-residue protein sequence, read N- to C-terminus: MNISEAAKLVGLSTKQIRDYEKMGLIKPAVRSLSGYRNYGESDLERLHFIRHSRNVGFSLHQIAQLLALQDNPKRSCREVKVLTAQHIATLNQQIEQLQKMVQKLQHWHDSCQGNDNPECLILNGLNG.

One can recognise an HTH merR-type domain in the interval 1 to 69; it reads MNISEAAKLV…LHQIAQLLAL (69 aa). Residues 4 to 23 constitute a DNA-binding region (H-T-H motif); sequence SEAAKLVGLSTKQIRDYEKM.

Its subcellular location is the cytoplasm. Its function is as follows. Could be a copper-dependent transcriptional activator of the ATPase HI_0290. The sequence is that of Probable heavy metal-dependent transcriptional regulator HI_0293 from Haemophilus influenzae (strain ATCC 51907 / DSM 11121 / KW20 / Rd).